The primary structure comprises 332 residues: Aquaporin-7-2 (332 aa).

Residues 1 to 40 (MSGQHQITEQPSGNPLSRTSTLIQEKPLTPTSSHAGTQKQ) show a composition bias toward polar residues. Positions 1 to 46 (MSGQHQITEQPSGNPLSRTSTLIQEKPLTPTSSHAGTQKQPEAPRQ) are disordered. Residues 1-66 (MSGQHQITEQ…RHAIRKPMAE (66 aa)) lie on the Cytoplasmic side of the membrane. The helical transmembrane segment at 67–87 (FFGVALLIIFGAGSACQVVLS) threads the bilayer. The Extracellular portion of the chain corresponds to 88–100 (TNPDVASSARGSF). A helical transmembrane segment spans residues 101–121 (LSINFGWAIGIAMGVWVSGGI). The Cytoplasmic portion of the chain corresponds to 122–144 (SGGHINPAITIAMATYRGFPWCK). The short motif at 127-129 (NPA) is the NPA 1 element. Residues 145–165 (VPSYILAQVLGGVVGAALVYA) form a helical membrane-spanning segment. At 166-199 (NYIHAIDVFEGGHHIRTEATASLFATYALPYMTQ) the chain is on the extracellular side. The helical transmembrane segment at 200–220 (ASCFFSEFLATAVLSMMVFAL) threads the bilayer. The Cytoplasmic segment spans residues 221 to 230 (TDKRNHSPTN). A helical membrane pass occupies residues 231–251 (GLLPFALFILFVGLGASLGME). The Extracellular segment spans residues 252-283 (TAYALNPARDFGPRLFLAMAGYGKALFNYRSQ). The NPA 2 signature appears at 257–259 (NPA). A helical membrane pass occupies residues 284-304 (YWLWAPIIAPVLGAQAGGLLY). The Cytoplasmic segment spans residues 305-332 (DTFLNDGDNSPIKWRCASSQEQQLAEVV).

This sequence belongs to the MIP/aquaporin (TC 1.A.8) family.

It localises to the membrane. It catalyses the reaction H2O(in) = H2O(out). In terms of biological role, water channel required to facilitate the transport of water across membranes. Does not mediate the transport carbon dioxide across the membrane. This chain is Aquaporin-7-2, found in Laccaria bicolor (Bicoloured deceiver).